Here is a 335-residue protein sequence, read N- to C-terminus: Glyceraldehyde-3-phosphate dehydrogenase (335 aa).

Residues 12–13, D36, R80, and S122 contribute to the NAD(+) site; that span reads RI. D-glyceraldehyde 3-phosphate is bound by residues 152-154, T183, R198, 211-212, and R234; these read SCT and TG. C153 functions as the Nucleophile in the catalytic mechanism. N316 contributes to the NAD(+) binding site.

This sequence belongs to the glyceraldehyde-3-phosphate dehydrogenase family. As to quaternary structure, homotetramer.

Its subcellular location is the cytoplasm. It carries out the reaction D-glyceraldehyde 3-phosphate + phosphate + NAD(+) = (2R)-3-phospho-glyceroyl phosphate + NADH + H(+). It participates in carbohydrate degradation; glycolysis; pyruvate from D-glyceraldehyde 3-phosphate: step 1/5. Functionally, catalyzes the oxidative phosphorylation of glyceraldehyde 3-phosphate (G3P) to 1,3-bisphosphoglycerate (BPG) using the cofactor NAD. The first reaction step involves the formation of a hemiacetal intermediate between G3P and a cysteine residue, and this hemiacetal intermediate is then oxidized to a thioester, with concomitant reduction of NAD to NADH. The reduced NADH is then exchanged with the second NAD, and the thioester is attacked by a nucleophilic inorganic phosphate to produce BPG. The polypeptide is Glyceraldehyde-3-phosphate dehydrogenase (gap) (Xanthobacter flavus).